We begin with the raw amino-acid sequence, 271 residues long: Elongation factor Ts (271 aa).

The segment at 76–79 (TDFV) is involved in Mg(2+) ion dislocation from EF-Tu.

Belongs to the EF-Ts family.

It localises to the cytoplasm. Functionally, associates with the EF-Tu.GDP complex and induces the exchange of GDP to GTP. It remains bound to the aminoacyl-tRNA.EF-Tu.GTP complex up to the GTP hydrolysis stage on the ribosome. This Mycobacterium bovis (strain BCG / Pasteur 1173P2) protein is Elongation factor Ts.